The following is a 141-amino-acid chain: Hemoglobin subunit alpha (141 aa).

In terms of domain architecture, Globin spans 1 to 141; that stretch reads VLSSTDKSNV…VSTVLTSKYR (141 aa). Residue serine 3 is modified to Phosphoserine. 2 positions are modified to N6-succinyllysine: lysine 7 and lysine 11. Lysine 16 carries the post-translational modification N6-acetyllysine; alternate. Residue lysine 16 is modified to N6-succinyllysine; alternate. Tyrosine 24 carries the post-translational modification Phosphotyrosine. Serine 35 carries the post-translational modification Phosphoserine. An N6-succinyllysine modification is found at lysine 40. Residue histidine 58 participates in O2 binding. A heme b-binding site is contributed by histidine 87. The residue at position 102 (serine 102) is a Phosphoserine. A Phosphothreonine modification is found at threonine 108. A phosphoserine mark is found at serine 124 and serine 131. Threonine 134 and threonine 137 each carry phosphothreonine. Serine 138 is modified (phosphoserine).

The protein belongs to the globin family. In terms of assembly, heterotetramer of two alpha chains and two beta chains. Red blood cells.

Involved in oxygen transport from the lung to the various peripheral tissues. Functionally, hemopressin acts as an antagonist peptide of the cannabinoid receptor CNR1. Hemopressin-binding efficiently blocks cannabinoid receptor CNR1 and subsequent signaling. The chain is Hemoglobin subunit alpha (HBA) from Pteropus alecto (Black flying fox).